The sequence spans 858 residues: Ubiquitin carboxyl-terminal hydrolase 5 (858 aa).

Alanine 2 carries the N-acetylalanine modification. A disordered region spans residues 74-96; the sequence is RRTRRPKEEDPATGTGDPPRKKP. Lysine 113 is covalently cross-linked (Glycyl lysine isopeptide (Lys-Gly) (interchain with G-Cter in SUMO)). Residues serine 149 and serine 156 each carry the phosphoserine modification. The UBP-type; degenerate zinc-finger motif lies at 175–283; the sequence is QVSKHAFSLK…EHLSHFGIDM (109 aa). A disulfide bond links cysteine 195 and cysteine 816. Zn(2+) contacts are provided by cysteine 199 and cysteine 202. Tryptophan 209 lines the substrate pocket. Cysteine 219 is a binding site for Zn(2+). 221–224 contacts substrate; that stretch reads RRYF. Residue histidine 232 coordinates Zn(2+). Positions 259, 261, and 264 each coordinate substrate. Position 292 is a phosphothreonine (threonine 292). In terms of domain architecture, USP spans 326–856; sequence TGIRNLGNSC…LGYIYFYQRV (531 aa). Cysteine 335 functions as the Nucleophile in the catalytic mechanism. A Phosphothreonine modification is found at threonine 623. 2 UBA domains span residues 654 to 695 and 722 to 762; these read MLDE…VMSH and PPPE…IFSH. Serine 779, serine 783, and serine 785 each carry phosphoserine. Histidine 818 serves as the catalytic Proton acceptor.

The protein belongs to the peptidase C19 family. As to quaternary structure, homodimer. Interacts with TRIML1. In terms of processing, ubiquitinated by SMURF1; leading to proteasomal degradation. SUMOylated at Lys-113; SUMOylation affects the interaction with Cav3.2 channels.

It is found in the cytoplasm. Its subcellular location is the stress granule. The protein resides in the nucleus. The catalysed reaction is Thiol-dependent hydrolysis of ester, thioester, amide, peptide and isopeptide bonds formed by the C-terminal Gly of ubiquitin (a 76-residue protein attached to proteins as an intracellular targeting signal).. In terms of biological role, deubiquitinating enzyme that participates in a wide range of cellular processes by specifically cleaving isopeptide bonds between ubiquitin and substrate proteins or ubiquitin itself. Affects thereby important cellular signaling pathways such as NF-kappa-B, Wnt/beta-catenin, and cytokine production by regulating ubiquitin-dependent protein degradation. Participates in the activation of the Wnt signaling pathway by promoting FOXM1 deubiquitination and stabilization that induces the recruitment of beta-catenin to Wnt target gene promoter. Regulates the assembly and disassembly of heat-induced stress granules by mediating the hydrolysis of unanchored ubiquitin chains. Promotes lipopolysaccharide-induced apoptosis and inflammatory response by stabilizing the TXNIP protein. Affects T-cell biology by stabilizing the inhibitory receptor on T-cells PDC1. Acts as a negative regulator of autophagy by regulating ULK1 at both protein and mRNA levels. Acts also as a negative regulator of type I interferon production by simultaneously removing both 'Lys-48'-linked unanchored and 'Lys-63'-linked anchored polyubiquitin chains on the transcription factor IRF3. Modulates the stability of DNA mismatch repair protein MLH1 and counteracts the effect of the ubiquitin ligase UBR4. Upon activation by insulin, it gets phosphorylated through mTORC1-mediated phosphorylation to enhance YTHDF1 stability by removing 'Lys-11'-linked polyubiquitination. May also deubiquitinate other substrates such as the calcium channel CACNA1H. The protein is Ubiquitin carboxyl-terminal hydrolase 5 (USP5) of Homo sapiens (Human).